A 291-amino-acid polypeptide reads, in one-letter code: MQQIHRLERKLLRATAEAIRDFDLVSQGDRIMVAVSGGKDSYTLLHLLMRLRERAPIDFDLVAVNLDQGQPGFPAQVVEDHLRSVGVPYRMLQRDTYSVVRRLVPEGKTTCPVCSRLRRGVLYNAAVEMGCTKIALGHHRDDLVETLLLSALYSGALKSMPPKLRSRDGRNVVVRPLCYAAEEDVAAFAEAMRFPIVPCDLCGSQPNLRRKRVKRLLAELSAEHPAVKGNLLHALAHVVPSHLLDRDLHRQLADATGRDPWLDAEDEEAEDCGEPSAGDGVVSLGGARGGR.

The PP-loop motif signature appears at 36–41 (SGGKDS). [4Fe-4S] cluster is bound by residues Cys-111, Cys-114, and Cys-202. The disordered stretch occupies residues 259–291 (DPWLDAEDEEAEDCGEPSAGDGVVSLGGARGGR). A compositionally biased stretch (acidic residues) spans 262 to 273 (LDAEDEEAEDCG).

It belongs to the TtcA family. Homodimer. It depends on Mg(2+) as a cofactor. [4Fe-4S] cluster is required as a cofactor.

It is found in the cytoplasm. It carries out the reaction cytidine(32) in tRNA + S-sulfanyl-L-cysteinyl-[cysteine desulfurase] + AH2 + ATP = 2-thiocytidine(32) in tRNA + L-cysteinyl-[cysteine desulfurase] + A + AMP + diphosphate + H(+). It functions in the pathway tRNA modification. Its function is as follows. Catalyzes the ATP-dependent 2-thiolation of cytidine in position 32 of tRNA, to form 2-thiocytidine (s(2)C32). The sulfur atoms are provided by the cysteine/cysteine desulfurase (IscS) system. This chain is tRNA-cytidine(32) 2-sulfurtransferase, found in Anaeromyxobacter sp. (strain K).